The following is a 69-amino-acid chain: Protein translocase subunit SecE (69 aa).

A helical membrane pass occupies residues 43-63 (VAGAGILVIGFVGFLIYVLLT).

This sequence belongs to the SecE/SEC61-gamma family. In terms of assembly, component of the Sec protein translocase complex. Heterotrimer consisting of SecY (alpha), SecG (beta) and SecE (gamma) subunits. The heterotrimers can form oligomers, although 1 heterotrimer is thought to be able to translocate proteins. Interacts with the ribosome. May interact with SecDF, and other proteins may be involved.

It localises to the cell membrane. In terms of biological role, essential subunit of the Sec protein translocation channel SecYEG. Clamps together the 2 halves of SecY. May contact the channel plug during translocation. The sequence is that of Protein translocase subunit SecE from Methanococcoides burtonii (strain DSM 6242 / NBRC 107633 / OCM 468 / ACE-M).